The primary structure comprises 215 residues: N-(5'-phosphoribosyl)anthranilate isomerase (215 aa).

The protein belongs to the TrpF family.

It catalyses the reaction N-(5-phospho-beta-D-ribosyl)anthranilate = 1-(2-carboxyphenylamino)-1-deoxy-D-ribulose 5-phosphate. Its pathway is amino-acid biosynthesis; L-tryptophan biosynthesis; L-tryptophan from chorismate: step 3/5. This is N-(5'-phosphoribosyl)anthranilate isomerase from Rhizobium meliloti (strain 1021) (Ensifer meliloti).